A 415-amino-acid polypeptide reads, in one-letter code: MRFYKIISFMLLGLDDTDSPDGMCTTYLGALIANELKRRGFTVTNHRLVRLNPNVIWKTRGNAGISLEISGGDSTVVFEIACEFVERFARFECEKTNPGVVVVESPPDPAFYYQALQRFCTIEETVKRLERIGALYKGYKNGRGLIGALAAVSSVLPDKTYECLAYRKNEVLGTPRIYAEEGFFTSEEQTAPHTWDTVDFIRREIVCVPHGKDPVLYGIRGDTPKWAIKATGFLETEEPAFSQIWETNQGTDAHLLPLPDGGPIEGESYRFSGVVESLPITNRGGHVQFTILSNGMEIPVFAFEPTKYFRNAVRELVVGDEITICGSFQKGVLHLEKFRPNLLATQKSRSSPRCPICGGRMTSAGKDKGYKCRECSGKVRDVPDQERTLQTKWYEVPPGSRRHLAKPAVRMKDDI.

This sequence belongs to the TiaS family.

It is found in the cytoplasm. The catalysed reaction is cytidine(34) in tRNA(Ile2) + agmatine + ATP + H2O = 2-agmatinylcytidine(34) in tRNA(Ile2) + AMP + 2 phosphate + 2 H(+). ATP-dependent agmatine transferase that catalyzes the formation of 2-agmatinylcytidine (agm2C) at the wobble position (C34) of tRNA(Ile2), converting the codon specificity from AUG to AUA. The sequence is that of tRNA(Ile2) 2-agmatinylcytidine synthetase TiaS from Methanocorpusculum labreanum (strain ATCC 43576 / DSM 4855 / Z).